Consider the following 648-residue polypeptide: MVHSDLGIEELDSPESSLNGSEDMESKSNLYSQYEEKVRPCIDLIDSLRSLGVEQDLALPAIAVIGDQSSGKSSVLEALSGVALPRGSGIVTRCPLVLRLKKLGNEDEWKGKVSFLDKEIEIPDASQVEKEISEAQIAIAGEGTGISHELISLEVSSPHVPDLTLIDLPGITRVAVGNQPPDIEYQIKSLIRKYILRQETINLVVVPANVDIATTEALRMAQEVDPQGDRTIGILTKPDLVDKGTEDKVVDVVRNLVFHLKKGYMIVKCRGQQDIKHRMSLDKALQRERIFFEDHAHFRDLLEEGKATIPCLAERLTSELIMHICKTLPLLENQIKETHQRITEELQKYGKDIPEEESEKMFCLIEKIDTFNKEIISTIEGEEFVEQYDSRLFTKVRAEFSKWSAVVEKNFEKGYEAIRKEIKQFENRYRGRELPGFVNYKTFETIIKKQVRVLEEPAVDMLHTVTDIIRNTFTDVSGKHFNEFFNLHRTAKSKIEDIRLEQENEAEKSIRLHFQMEQLVYCQDQVYRRALQQVREKEAEEEKNKKSNHYFQSQVSEPSTDEIFQHLTAYQQEVSTRISGHIPLIIQFFVLRTYGEQLKKSMLQLLQDKDQYDWLLKERTDTRDKRKFLKERLERLTRARQRLAKFPG.

An N-acetylmethionine modification is found at methionine 1. The disordered stretch occupies residues 1 to 26 (MVHSDLGIEELDSPESSLNGSEDMES). One can recognise a Dynamin-type G domain in the interval 56-329 (DLALPAIAVI…LIMHICKTLP (274 aa)). Residues 66 to 73 (GDQSSGKS) are G1 motif. 66 to 73 (GDQSSGKS) serves as a coordination point for GTP. A G2 motif region spans residues 91-93 (VTR). The tract at residues 167-170 (DLPG) is G3 motif. Residues 167–171 (DLPGI) and 236–239 (TKPD) contribute to the GTP site. Residues 236–239 (TKPD) are G4 motif. Residues 268-271 (KCRG) form a G5 motif region. The bundle signaling element (BSE) stretch occupies residues 330 to 355 (LLENQIKETHQRITEELQKYGKDIPE). The segment at 355–522 (EEESEKMFCL…HFQMEQLVYC (168 aa)) is middle domain. Positions 356-618 (EESEKMFCLI…KDQYDWLLKE (263 aa)) are stalk. Positions 543 to 546 (KNKK) are critical for lipid-binding. The region spanning 560–648 (TDEIFQHLTA…ARQRLAKFPG (89 aa)) is the GED domain.

Belongs to the TRAFAC class dynamin-like GTPase superfamily. Dynamin/Fzo/YdjA family. Homooligomer. Oligomerizes into multimeric filamentous or ring-like structures by virtue of its stalk domain. Oligomerization is critical for GTPase activity, protein stability, and recognition of viral target structures. Interacts with TRPC1, TRPC3, TRPC4, TRPC5, TRPC6 and TRPC7. Interacts with HSPA5. Interacts with TUBB/TUBB5. Interacts with DDX39A and DDX39B. Post-translationally, ISGylated. In terms of tissue distribution, ubiquitously expressed.

The protein resides in the cytoplasm. It localises to the endoplasmic reticulum membrane. The protein localises to the perinuclear region. Its subcellular location is the nucleus. Interferon-induced dynamin-like GTPase with antiviral activity against rabies virus (RABV), vesicular stomatitis virus (VSV) and murine pneumonia virus (MPV). Isoform 1 but not isoform 2 shows antiviral activity against vesicular stomatitis virus (VSV). This is Interferon-induced GTP-binding protein Mx1 (MX1) from Bos taurus (Bovine).